The sequence spans 872 residues: MKELSSAQIRQMWLDFWKSKGHCVEPSANLVPVNDPTLLWINSGVATLKKYFDGSVIPENPRITNAQKSIRTNDIENVGKTARHHTMFEMLGNFSIGDYFRDEAIEWGFELLTSPDWFDFPKDKLYMTYYPDDKDSYNRWIACGVEPSHLVPIEDNFWEIGAGPSGPDTEIFFDRGEDFDPENIGLRLLAEDIENDRYIEIWNIVLSQFNADPAVPRSEYKELPNKNIDTGAGLERLAAVMQGAKTNFETDLFMPIIREVEKLSGKTYNPDGDNMSFKVIADHIRALSFAIGDGALPGNEGRGYVLRRLLRRAVMHGRRLGINETFLYKLVLTVGQIMESYYPEVLEKRDFIEKIVKREEETFARTIDAGSGHLDSLLAQLKAEGKDTLEGKDIFKLYDTYGFPVELTEELAEDAGYKIDHEGFKSAMKEQQDRARAAVVKGGSMGMQNETLAGIVEESRFEYDTYSLESSLSVIIADNERTEAVSEGQALLVFAQTPFYAEMGGQVADTGRIKNDKGDTVAEVVDVQKAPNGQPLHTVNVLASLSVGTNYTLEINKERRLAVEKNHTATHLLHAALHNVIGEHATQAGSLNEEEFLRFDFTHFEAVSNEELRHIEQEVNEQIWNALTITTTETDVETAKEMGAMALFGEKYGKVVRVVQIGNYSVELCGGTHLNNSSEIGLFKIVKEEGIGSGTRRIIAVTGRQAFEAYRNQEDALKEIAATVKAPQLKDAAAKVQALSDSLRDLQKENAELKEKAAAAAAGDVFKDVQEAKGVRFIASQVDVADAGALRTFADNWKQKDYSDVLVLVAAIGEKVNVLVASKTKDVHAGNMIKELAPIVAGRGGGKPDMAMAGGSDASKIAELLAAVAETV.

Residues histidine 567, histidine 571, cysteine 669, and histidine 673 each contribute to the Zn(2+) site.

Belongs to the class-II aminoacyl-tRNA synthetase family. It depends on Zn(2+) as a cofactor.

The protein resides in the cytoplasm. The enzyme catalyses tRNA(Ala) + L-alanine + ATP = L-alanyl-tRNA(Ala) + AMP + diphosphate. In terms of biological role, catalyzes the attachment of alanine to tRNA(Ala) in a two-step reaction: alanine is first activated by ATP to form Ala-AMP and then transferred to the acceptor end of tRNA(Ala). Also edits incorrectly charged Ser-tRNA(Ala) and Gly-tRNA(Ala) via its editing domain. In Streptococcus pyogenes serotype M4 (strain MGAS10750), this protein is Alanine--tRNA ligase.